The primary structure comprises 516 residues: Probable inorganic phosphate transporter 1-6 (516 aa).

Ala-2 bears the N-acetylalanine mark. Topologically, residues 2 to 25 (ANEEQGSILKALDVAKTQWYHVTA) are cytoplasmic. A helical membrane pass occupies residues 26–46 (VVVSGMGFFTDSYDLFVISLI). Topologically, residues 47 to 71 (TKLLGRIYYQVPGSSSPGSLPDGIS) are extracellular. A helical membrane pass occupies residues 72–92 (AAVSGVAFAGTFIGQIFFGCL). At 93–100 (GDKLGRKR) the chain is on the cytoplasmic side. Residues 101–121 (VYGLTLLIMTICSICSGLSLG) form a helical membrane-spanning segment. Topologically, residues 122–132 (RDPKTVMVTLC) are extracellular. The helical transmembrane segment at 133 to 153 (FFRFWLGFGIGGDYPLSATIM) threads the bilayer. At 154–162 (SEYSNKRTR) the chain is on the cytoplasmic side. A helical membrane pass occupies residues 163 to 183 (GAFIAAVFGMQGIGILAAGAV). The Extracellular portion of the chain corresponds to 184-212 (SLLVSAVFESKFPSRAYILDGAASTVPQA). The helical transmembrane segment at 213-233 (DYVWRIILMVGALPALLTYYW) threads the bilayer. Residues 234 to 293 (RMKMPETARYTALVSKNAEQAALDMTKVLNVDIEASAAKNDQARVSSDEFGLFSMKFLRR) are Cytoplasmic-facing. Residues 294-314 (HGLHLLGTASTWFLLDIAFYS) traverse the membrane as a helical segment. Residues 315 to 349 (QNLFQKDIFTTIGWLPSAKTMNAIQELYMIAKAQT) are Extracellular-facing. The chain crosses the membrane as a helical span at residues 350–370 (IIACCSTVPGYFFTVGFIDYM). The Cytoplasmic segment spans residues 371-374 (GRKK). A helical membrane pass occupies residues 375 to 395 (IQIMGFAMMTIFMLSLAIPYH). The Extracellular segment spans residues 396–403 (HWTLPANR). Residues 404-424 (IGFVVLYSFTFFFSNFGPNAT) traverse the membrane as a helical segment. The Cytoplasmic segment spans residues 425–442 (TFIVPAEIFPARIRSTCH). A helical membrane pass occupies residues 443 to 463 (GISAASGKAGAMVGSFGFSAL). Over 464–471 (VKALGMSN) the chain is Extracellular. The chain crosses the membrane as a helical span at residues 472–492 (TLYIMAGINLLGLLLTFTIPE). Over 493–516 (TNGKSLEELSGETEPEKIKEKIVV) the chain is Cytoplasmic.

This sequence belongs to the major facilitator superfamily. Phosphate:H(+) symporter (TC 2.A.1.9) family. As to expression, expressed in anthers, tapetumand mature pollen and, to a lower extent, in hydathodes and vascular tissues of cotyledons of flowering plants.

It localises to the membrane. Functionally, high-affinity transporter for external inorganic phosphate. This is Probable inorganic phosphate transporter 1-6 (PHT1-6) from Arabidopsis thaliana (Mouse-ear cress).